Consider the following 361-residue polypeptide: Spermatogenesis-associated protein 17 (361 aa).

3 consecutive IQ domains span residues 32 to 61 (ENDAAVKIQSWFRGCQVRAYVRHLNRIVTI), 55 to 84 (LNRIVTIIQKWWRSFLGRKQYQLTVQVAYY), and 91 to 120 (YNAMAVRKQRRWRGYRVRKYLFNYYYLKEY).

The protein localises to the cytoplasm. In Macaca fascicularis (Crab-eating macaque), this protein is Spermatogenesis-associated protein 17 (SPATA17).